The following is a 462-amino-acid chain: Glycine--tRNA ligase (462 aa).

The substrate site is built by Arg100 and Glu174. ATP is bound by residues 206–208 (RNE), 216–221 (FRTREF), 290–291 (EL), and 334–337 (GADR). 221–225 (FEQME) serves as a coordination point for substrate. Position 330 to 334 (330 to 334 (EPSLG)) interacts with substrate.

This sequence belongs to the class-II aminoacyl-tRNA synthetase family. In terms of assembly, homodimer.

Its subcellular location is the cytoplasm. It carries out the reaction tRNA(Gly) + glycine + ATP = glycyl-tRNA(Gly) + AMP + diphosphate. In terms of biological role, catalyzes the attachment of glycine to tRNA(Gly). This Alkaliphilus metalliredigens (strain QYMF) protein is Glycine--tRNA ligase.